The following is a 156-amino-acid chain: Small ribosomal subunit protein uS7 (156 aa).

It belongs to the universal ribosomal protein uS7 family. In terms of assembly, part of the 30S ribosomal subunit. Contacts proteins S9 and S11.

Its function is as follows. One of the primary rRNA binding proteins, it binds directly to 16S rRNA where it nucleates assembly of the head domain of the 30S subunit. Is located at the subunit interface close to the decoding center, probably blocks exit of the E-site tRNA. This Rhodococcus opacus (strain B4) protein is Small ribosomal subunit protein uS7.